A 261-amino-acid chain; its full sequence is Putative phosphite transport system permease protein HtxE (261 aa).

Residues 47-253 (EATTETVEVL…VFVFVLDQLQ (207 aa)) form the ABC transmembrane type-1 domain. 3 consecutive transmembrane segments (helical) span residues 122-142 (LIVA…GVLA), 203-220 (RNLR…GGIG), and 229-249 (MFQY…VFVL).

Belongs to the binding-protein-dependent transport system permease family.

Its subcellular location is the cell inner membrane. Probably forms part of a binding-protein-dependent hypophosphite transporter. The sequence is that of Putative phosphite transport system permease protein HtxE (htxE) from Stutzerimonas stutzeri (Pseudomonas stutzeri).